The primary structure comprises 111 residues: Small ribosomal subunit protein bS18 (111 aa).

A disordered region spans residues 1–32 (MDLENTENVENNNNNEEEVKAKGERKAHFNKE). Over residues 17–32 (EEVKAKGERKAHFNKE) the composition is skewed to basic and acidic residues.

Belongs to the bacterial ribosomal protein bS18 family. As to quaternary structure, part of the 30S ribosomal subunit. Forms a tight heterodimer with protein bS6.

Binds as a heterodimer with protein bS6 to the central domain of the 16S rRNA, where it helps stabilize the platform of the 30S subunit. This Brachyspira hyodysenteriae (strain ATCC 49526 / WA1) protein is Small ribosomal subunit protein bS18.